Here is a 202-residue protein sequence, read N- to C-terminus: ATP synthase subunit b (202 aa).

The helical transmembrane segment at 9-29 threads the bilayer; it reads TTLSLCLAVCVVVIAVGTGWA.

Belongs to the ATPase B chain family. In terms of assembly, F-type ATPases have 2 components, F(1) - the catalytic core - and F(0) - the membrane proton channel. F(1) has five subunits: alpha(3), beta(3), gamma(1), delta(1), epsilon(1). F(0) has three main subunits: a(1), b(2) and c(10-14). The alpha and beta chains form an alternating ring which encloses part of the gamma chain. F(1) is attached to F(0) by a central stalk formed by the gamma and epsilon chains, while a peripheral stalk is formed by the delta and b chains.

Its subcellular location is the cell inner membrane. Its function is as follows. F(1)F(0) ATP synthase produces ATP from ADP in the presence of a proton or sodium gradient. F-type ATPases consist of two structural domains, F(1) containing the extramembraneous catalytic core and F(0) containing the membrane proton channel, linked together by a central stalk and a peripheral stalk. During catalysis, ATP synthesis in the catalytic domain of F(1) is coupled via a rotary mechanism of the central stalk subunits to proton translocation. In terms of biological role, component of the F(0) channel, it forms part of the peripheral stalk, linking F(1) to F(0). This is ATP synthase subunit b from Pelobacter propionicus (strain DSM 2379 / NBRC 103807 / OttBd1).